The sequence spans 100 residues: Urease subunit gamma (100 aa).

The protein belongs to the urease gamma subunit family. Heterotrimer of UreA (gamma), UreB (beta) and UreC (alpha) subunits. Three heterotrimers associate to form the active enzyme.

It localises to the cytoplasm. The catalysed reaction is urea + 2 H2O + H(+) = hydrogencarbonate + 2 NH4(+). It functions in the pathway nitrogen metabolism; urea degradation; CO(2) and NH(3) from urea (urease route): step 1/1. This chain is Urease subunit gamma, found in Hahella chejuensis (strain KCTC 2396).